Here is a 187-residue protein sequence, read N- to C-terminus: Bifunctional protein PyrR (187 aa).

Positions 109–121 (VILVDDVLYSGRS) match the PRPP-binding motif.

It belongs to the purine/pyrimidine phosphoribosyltransferase family. PyrR subfamily.

The catalysed reaction is UMP + diphosphate = 5-phospho-alpha-D-ribose 1-diphosphate + uracil. Functionally, regulates the transcription of the pyrimidine nucleotide (pyr) operon in response to exogenous pyrimidines. Also displays a weak uracil phosphoribosyltransferase activity which is not physiologically significant. The sequence is that of Bifunctional protein PyrR from Mycobacterium ulcerans (strain Agy99).